Reading from the N-terminus, the 578-residue chain is Proline--tRNA ligase (578 aa).

The protein belongs to the class-II aminoacyl-tRNA synthetase family. ProS type 1 subfamily. Homodimer.

The protein resides in the cytoplasm. The catalysed reaction is tRNA(Pro) + L-proline + ATP = L-prolyl-tRNA(Pro) + AMP + diphosphate. Functionally, catalyzes the attachment of proline to tRNA(Pro) in a two-step reaction: proline is first activated by ATP to form Pro-AMP and then transferred to the acceptor end of tRNA(Pro). As ProRS can inadvertently accommodate and process non-cognate amino acids such as alanine and cysteine, to avoid such errors it has two additional distinct editing activities against alanine. One activity is designated as 'pretransfer' editing and involves the tRNA(Pro)-independent hydrolysis of activated Ala-AMP. The other activity is designated 'posttransfer' editing and involves deacylation of mischarged Ala-tRNA(Pro). The misacylated Cys-tRNA(Pro) is not edited by ProRS. The sequence is that of Proline--tRNA ligase from Burkholderia lata (strain ATCC 17760 / DSM 23089 / LMG 22485 / NCIMB 9086 / R18194 / 383).